The chain runs to 239 residues: Ribosomal RNA large subunit methyltransferase E (239 aa).

A disordered region spans residues 1-20 (MTKAPIAGNRTGRKLGQRVK). A compositionally biased stretch (basic residues) spans 11-20 (TGRKLGQRVK). 5 residues coordinate S-adenosyl-L-methionine: G81, W83, D104, D120, and D144. Residue K184 is the Proton acceptor of the active site.

This sequence belongs to the class I-like SAM-binding methyltransferase superfamily. RNA methyltransferase RlmE family.

Its subcellular location is the cytoplasm. The enzyme catalyses uridine(2552) in 23S rRNA + S-adenosyl-L-methionine = 2'-O-methyluridine(2552) in 23S rRNA + S-adenosyl-L-homocysteine + H(+). In terms of biological role, specifically methylates the uridine in position 2552 of 23S rRNA at the 2'-O position of the ribose in the fully assembled 50S ribosomal subunit. The polypeptide is Ribosomal RNA large subunit methyltransferase E (Rhizobium johnstonii (strain DSM 114642 / LMG 32736 / 3841) (Rhizobium leguminosarum bv. viciae)).